A 544-amino-acid chain; its full sequence is Methionine--tRNA ligase (544 aa).

The 'HIGH' region signature appears at 10 to 20; sequence PYANGSLHLGH. 4 residues coordinate Zn(2+): C141, C144, C153, and C156. Residues 329–333 carry the 'KMSKS' region motif; sequence KLSTS. T332 serves as a coordination point for ATP.

This sequence belongs to the class-I aminoacyl-tRNA synthetase family. MetG type 1 subfamily. Monomer. Requires Zn(2+) as cofactor.

The protein localises to the cytoplasm. It carries out the reaction tRNA(Met) + L-methionine + ATP = L-methionyl-tRNA(Met) + AMP + diphosphate. In terms of biological role, is required not only for elongation of protein synthesis but also for the initiation of all mRNA translation through initiator tRNA(fMet) aminoacylation. The polypeptide is Methionine--tRNA ligase (Bacillus cereus (strain 03BB102)).